The following is a 467-amino-acid chain: Cysteine--tRNA ligase (467 aa).

Position 29 (Cys29) interacts with Zn(2+). Positions 31 to 41 (PTVYNYIHIGN) match the 'HIGH' region motif. Zn(2+)-binding residues include Cys209, His234, and Glu238. A 'KMSKS' region motif is present at residues 266–270 (KMSKS). Lys269 serves as a coordination point for ATP. The residue at position 270 (Ser270) is a Phosphoserine.

This sequence belongs to the class-I aminoacyl-tRNA synthetase family. Monomer. The cofactor is Zn(2+).

The protein localises to the cytoplasm. The catalysed reaction is tRNA(Cys) + L-cysteine + ATP = L-cysteinyl-tRNA(Cys) + AMP + diphosphate. The protein is Cysteine--tRNA ligase of Bacillus licheniformis (strain ATCC 14580 / DSM 13 / JCM 2505 / CCUG 7422 / NBRC 12200 / NCIMB 9375 / NCTC 10341 / NRRL NRS-1264 / Gibson 46).